A 24-amino-acid chain; its full sequence is Homotarsinin (24 aa).

Arginine amide is present on R24.

As to quaternary structure, homodimer; disulfide-linked. In terms of tissue distribution, expressed by the skin glands.

The protein resides in the secreted. Functionally, antimicrobial peptide. Active against Gram-negative bacteria E.coli ATCC 25922 (MIC=1.5 uM) and P.aeruginosa ATTC 27853 (MIC=23.2 uM) and against Gram-positive bacterium S.aureus ATCC 29313 (MIC=11.6 uM). Has no hemolytic activity. Associates with and disrupts membranes in vitro. This chain is Homotarsinin, found in Phyllomedusa tarsius (Brownbelly leaf frog).